We begin with the raw amino-acid sequence, 181 residues long: Probable pyruvoyl-dependent arginine decarboxylase (181 aa).

Ser43 carries the pyruvic acid (Ser) modification.

Belongs to the PdaD family. Pyruvate serves as cofactor.

The catalysed reaction is L-arginine + H(+) = agmatine + CO2. The polypeptide is Probable pyruvoyl-dependent arginine decarboxylase (Chlorobaculum parvum (strain DSM 263 / NCIMB 8327) (Chlorobium vibrioforme subsp. thiosulfatophilum)).